A 445-amino-acid polypeptide reads, in one-letter code: C-terminal-binding protein 2 (445 aa).

Arginine 22 is modified (asymmetric dimethylarginine). Residues serine 106, 186-191, aspartate 210, 243-249, 270-272, and aspartate 296 each bind NAD(+); these read IGFGRT, CNLNEHN, and AAR. Arginine 272 is a catalytic residue. Glutamate 301 is an active-site residue. Catalysis depends on histidine 321, which acts as the Proton donor. 321 to 324 serves as a coordination point for NAD(+); sequence HTAW. Residues 414 to 445 are disordered; the sequence is THNLPTVAHPSQAPSPNQPTKHGDNREHPNEQ. Serine 428 is modified (phosphoserine). A compositionally biased stretch (basic and acidic residues) spans 434–445; that stretch reads KHGDNREHPNEQ.

It belongs to the D-isomer specific 2-hydroxyacid dehydrogenase family. As to quaternary structure, can form homodimers or heterodimers of CTBP1 and CTBP2. Interacts with HIPK2 and ZNF217. Interacts with PRDM16; represses white adipose tissue (WAT)-specific genes expression. Interacts with PNN, NRIP1 and WIZ. Interacts with MCRIP1. (Microbial infection) Interacts with human adenovirus 5 E1A protein; this interaction seems to potentiate viral replication. Ubiquitous. Highest levels in heart, skeletal muscle, and pancreas.

It is found in the nucleus. The protein localises to the synapse. Functionally, corepressor targeting diverse transcription regulators. Functions in brown adipose tissue (BAT) differentiation. Its function is as follows. Isoform 2 probably acts as a scaffold for specialized synapses. In Homo sapiens (Human), this protein is C-terminal-binding protein 2 (CTBP2).